A 266-amino-acid chain; its full sequence is Norfluorocurarine synthase 2 (266 aa).

One can recognise an AB hydrolase-1 domain in the interval 11–121 (HFVLVHGAGH…IMPDSTHPPI (111 aa)). Catalysis depends on residues S86, D216, and H244.

It belongs to the AB hydrolase superfamily. Homodimer. In terms of tissue distribution, mainly expressed in roots.

The enzyme catalyses 17-dehydropreakuammicine + H2O = norfluorocurarine + methanol + CO2. The protein operates within alkaloid biosynthesis. Its function is as follows. Hydrolase involved in the biosynthesis of curare monoterpene indole alkaloids (MIAs), natural products such as strychnine, a neurotoxic compound used as a pesticide to control rodents, and its pharmacologically active derivatives, including brucine, used to regulate blood pressure. Curare alkaloids act as animal glycine receptor antagonists. Catalyzes the conversion of dehydropreakuammicine to norfluorocurarine. The chain is Norfluorocurarine synthase 2 from Strychnos nux-vomica (Poison nut).